The sequence spans 660 residues: DNA ligase (660 aa).

Residues 31–35, 79–80, and Glu-111 each bind NAD(+); these read DKEYD and SL. The N6-AMP-lysine intermediate role is filled by Lys-113. The NAD(+) site is built by Arg-134, Glu-168, Lys-280, and Lys-304. Zn(2+) contacts are provided by Cys-397, Cys-400, Cys-413, and Cys-419. Positions 577–660 constitute a BRCT domain; that stretch reads RQESIFSGKT…LDEAAFEALL (84 aa).

It belongs to the NAD-dependent DNA ligase family. LigA subfamily. It depends on Mg(2+) as a cofactor. The cofactor is Mn(2+).

It catalyses the reaction NAD(+) + (deoxyribonucleotide)n-3'-hydroxyl + 5'-phospho-(deoxyribonucleotide)m = (deoxyribonucleotide)n+m + AMP + beta-nicotinamide D-nucleotide.. DNA ligase that catalyzes the formation of phosphodiester linkages between 5'-phosphoryl and 3'-hydroxyl groups in double-stranded DNA using NAD as a coenzyme and as the energy source for the reaction. It is essential for DNA replication and repair of damaged DNA. This is DNA ligase from Alkaliphilus metalliredigens (strain QYMF).